The chain runs to 1108 residues: MSAWLLPAGGLPGAGFCVPARQSPSSFSRVLRWPRPGLPGLLLLLLLPSPSALSAVFKVGVLGPWACDPIFARARPDLAARLAANRLNRDFALDGGPRFEVALLPEPCLTPGSLGAVSSALSRVSGLVGPVNPAACRPAELLAQEAGVALVPWGCPGTRAAGTTAPAVTPAADALYVLLRAFRWARVALITAPQDLWVEAGRALSTALRARGLPVALVTSMETSDRSGAREALGRIRDGPRVRVVIMVMHSVLLGGEEQRYLLEAAEELALTDGSLVFLPFDTLHYALSPGPEALAAFVNSSQLRRAHDAVLTLTRRCPPGGSVQDSLRRAQEHQELPLDLNLKQVSPLFGTIYDAVFLLAGGVKRARTAVGGGWVSGASVARQVREAQVSGFCGVLGRTEEPSFVLLDTDASGEQLFATHLLDPVLGSLRSAGTPMHFPRGGPAPGPDPSCWFDPDVICNGGVEPGLVFVGFLLVIGMGLTGAFLAHYLRHRLLHMQMASGPNKIILTLEDVTFLHPPGGSSRKVVQGSRSSLATRSASDIRSVPSQPQESTNVGLYEGDWVWLKKFPGEHHMAIRPATKTAFSKLRELRHENVALYLGLFLAGTADSPATPGEGILAVVSEHCARGSLHDLLAQREIKLDWMFKSSLLLDLIKGMRYLHHRGVAHGRLKSRNCVVDGRFVLKVTDHGHGRLLEAQRVLPEPPSAEDQLWTAPELLRDPSLERRGTLAGDVFSLAIIMQEVVCRSTPYAMLELTPEEVIQRVRSPPPLCRPLVSMDQAPMECIQLMTQCWAEHPELRPSMDLTFDLFKSINKGRKTNIIDSMLRMLEQYSSNLEDLIRERTEELEQEKQKTDRLLTQMLPPSVAEALKMGTSVEPEYFEEVTLYFSDIVGFTTISAMSEPIEVVDLLNDLYTLFDAIIGAHDVYKVETIGDAYMVASGLPQRNGQRHAAEIANMSLDILSAVGSFRMRHMPEVPVRIRIGLHSGPCVAGVVGLTMPRYCLFGDTVNTASRMESTGLPYRIHVNMSTVRILRALDQGFQMECRGRTELKGKGIEDTYWLVGRLGFNKPIPKPPDLQPGASNHGISLQEIPPERRKKLEKARPGQFTGK.

The first 54 residues, 1 to 54 (MSAWLLPAGGLPGAGFCVPARQSPSSFSRVLRWPRPGLPGLLLLLLLPSPSALS), serve as a signal peptide directing secretion. The Extracellular portion of the chain corresponds to 55–465 (AVFKVGVLGP…PDVICNGGVE (411 aa)). Residues cysteine 108 and cysteine 136 are joined by a disulfide bond. Asparagine 300 carries an N-linked (GlcNAc...) asparagine glycan. Residues 466-490 (PGLVFVGFLLVIGMGLTGAFLAHYL) traverse the membrane as a helical segment. The Protein kinase domain maps to 491–811 (RHRLLHMQMA…DLTFDLFKSI (321 aa)). At 491–1108 (RHRLLHMQMA…KARPGQFTGK (618 aa)) the chain is on the cytoplasmic side. A Guanylate cyclase domain is found at 883–1013 (TLYFSDIVGF…DTVNTASRME (131 aa)). The interval 1069–1108 (IPKPPDLQPGASNHGISLQEIPPERRKKLEKARPGQFTGK) is disordered.

It belongs to the adenylyl cyclase class-4/guanylyl cyclase family. Homodimer; requires homodimerization for guanylyl cyclase activity. Interacts (via C-terminus) with RD3 (via C-terminus); promotes the exit of GUCY2E from the endoplasmic reticulum and its trafficking to the photoreceptor outer segments. Interaction with RD3 negatively regulates GUCY2E guanylate cyclase activity. Post-translationally, there are 9 conserved cysteine residues in sensory guanylate cyclases, 6 in the extracellular domain, which may be involved in intra- or interchain disulfide bonds.

The protein localises to the photoreceptor outer segment membrane. The protein resides in the endoplasmic reticulum membrane. It catalyses the reaction GTP = 3',5'-cyclic GMP + diphosphate. With respect to regulation, activated by GUCA1A when free calcium ions concentration is low, and inhibited by GUCA1A when free calcium ions concentration is high. Negatively regulated by RD3; RD3 inhibits the basal and GUCA1A-stimulated guanylate cyclase activity. Functionally, catalyzes the synthesis of cyclic GMP (cGMP) in rods and cones of photoreceptors. Plays an essential role in phototransduction, by mediating cGMP replenishment. May also participate in the trafficking of membrane-asociated proteins to the photoreceptor outer segment membrane. The chain is Retinal guanylyl cyclase 1 (Gucy2e) from Mus musculus (Mouse).